The primary structure comprises 121 residues: Protein ripply2.1 (121 aa).

The tract at residues 1 to 69 (MEPNQQRSCG…DKGKPPSFQH (69 aa)) is disordered. Positions 29-32 (WRPW) match the WRPW motif motif. Positions 39–57 (HVQNPPTAQQQFYSDNQSH) are enriched in polar residues. The tract at residues 69 to 104 (HPVKLFWPKSRCYDFMYQEAEELLRHFPVQATISLY) is ripply homology domain.

This sequence belongs to the ripply family. As to expression, expressed in the presomitic mesoderm (PSM) in the anterior halves of somitomeres S-0, S-I and S-II and in the newly formed somites.

Its subcellular location is the nucleus. Functionally, required during somitogenesis to regulate somite differentiation and the positioning of the presomitic mesoderm-front. Represses the expression of genes involved in somite segmentation by acting with the corepressor tle4 to down-regulate the transcriptional activity of tbx6. Also regulates retinoic acid signaling during somitogenesis and is necessary for the expression of aldh1a2/raldh2. The sequence is that of Protein ripply2.1 (ripply2.1) from Xenopus laevis (African clawed frog).